A 112-amino-acid polypeptide reads, in one-letter code: MVAEKKAKKSHEGINSRLALVMKSGKYTLGYKSVLKSLRSSKGKLILISSNCPPLRRSEIEYYAMLAKVGVHRYNGNNVDLGTACGKYFRVSCLSIVDPGDSDIIKTLPGDQ.

Belongs to the eukaryotic ribosomal protein eL30 family.

In Arabidopsis thaliana (Mouse-ear cress), this protein is Large ribosomal subunit protein eL30x (RPL30C).